Reading from the N-terminus, the 175-residue chain is MASTTSRSARPARRNNKAASTTPLLWMAFALLVVVLDQFFKIVIVRTFTYGESRPVTGFFNLVLVYNKGAAFSFLADAGGWQRWFFTGLGIVVGAFIVWLLYRHTGQRLFCFAVSLILGGAVGNVIDRVVYGHVVDFLDFYVRNYHWPAFNVADCAITVGAVLLIVDELRRVRRH.

The next 4 membrane-spanning stretches (helical) occupy residues 25–45, 56–76, 81–101, and 110–130; these read LWMAFALLVVVLDQFFKIVIV, VTGFFNLVLVYNKGAAFSFLA, WQRWFFTGLGIVVGAFIVWLL, and FCFAVSLILGGAVGNVIDRVV. Residues Asp-136 and Asp-154 contribute to the active site. A helical membrane pass occupies residues 146–166; sequence HWPAFNVADCAITVGAVLLIV.

The protein belongs to the peptidase A8 family.

The protein localises to the cell inner membrane. It catalyses the reaction Release of signal peptides from bacterial membrane prolipoproteins. Hydrolyzes -Xaa-Yaa-Zaa-|-(S,diacylglyceryl)Cys-, in which Xaa is hydrophobic (preferably Leu), and Yaa (Ala or Ser) and Zaa (Gly or Ala) have small, neutral side chains.. It participates in protein modification; lipoprotein biosynthesis (signal peptide cleavage). Functionally, this protein specifically catalyzes the removal of signal peptides from prolipoproteins. In Cupriavidus necator (strain ATCC 17699 / DSM 428 / KCTC 22496 / NCIMB 10442 / H16 / Stanier 337) (Ralstonia eutropha), this protein is Lipoprotein signal peptidase.